The chain runs to 476 residues: tRNA-2-methylthio-N(6)-dimethylallyladenosine synthase (476 aa).

Over residues methionine 1–arginine 14 the composition is skewed to basic and acidic residues. A disordered region spans residues methionine 1–aspartate 20. The 122-residue stretch at arginine 26–glutamate 147 folds into the MTTase N-terminal domain. Cysteine 35, cysteine 71, cysteine 105, cysteine 170, cysteine 174, and cysteine 177 together coordinate [4Fe-4S] cluster. Positions aspartate 156 to glutamate 390 constitute a Radical SAM core domain. The 61-residue stretch at alanine 393 to arginine 453 folds into the TRAM domain.

Belongs to the methylthiotransferase family. MiaB subfamily. In terms of assembly, monomer. The cofactor is [4Fe-4S] cluster.

The protein resides in the cytoplasm. The catalysed reaction is N(6)-dimethylallyladenosine(37) in tRNA + (sulfur carrier)-SH + AH2 + 2 S-adenosyl-L-methionine = 2-methylsulfanyl-N(6)-dimethylallyladenosine(37) in tRNA + (sulfur carrier)-H + 5'-deoxyadenosine + L-methionine + A + S-adenosyl-L-homocysteine + 2 H(+). Functionally, catalyzes the methylthiolation of N6-(dimethylallyl)adenosine (i(6)A), leading to the formation of 2-methylthio-N6-(dimethylallyl)adenosine (ms(2)i(6)A) at position 37 in tRNAs that read codons beginning with uridine. The polypeptide is tRNA-2-methylthio-N(6)-dimethylallyladenosine synthase (Roseiflexus sp. (strain RS-1)).